Consider the following 610-residue polypeptide: tRNA uridine 5-carboxymethylaminomethyl modification enzyme MnmG (610 aa).

Position 14–19 (14–19 (GAGHAG)) interacts with FAD. 274–288 (GPRYCPSIEDKIVKF) provides a ligand contact to NAD(+).

Belongs to the MnmG family. In terms of assembly, homodimer. Heterotetramer of two MnmE and two MnmG subunits. FAD is required as a cofactor.

The protein resides in the cytoplasm. NAD-binding protein involved in the addition of a carboxymethylaminomethyl (cmnm) group at the wobble position (U34) of certain tRNAs, forming tRNA-cmnm(5)s(2)U34. This chain is tRNA uridine 5-carboxymethylaminomethyl modification enzyme MnmG, found in Chlamydia trachomatis serovar D (strain ATCC VR-885 / DSM 19411 / UW-3/Cx).